Reading from the N-terminus, the 353-residue chain is Uroporphyrinogen decarboxylase (353 aa).

Substrate-binding positions include 27 to 31, Phe46, Asp76, Tyr152, Ser207, and His321; that span reads RQAGR.

It belongs to the uroporphyrinogen decarboxylase family. In terms of assembly, homodimer.

It localises to the cytoplasm. The enzyme catalyses uroporphyrinogen III + 4 H(+) = coproporphyrinogen III + 4 CO2. Its pathway is porphyrin-containing compound metabolism; protoporphyrin-IX biosynthesis; coproporphyrinogen-III from 5-aminolevulinate: step 4/4. In terms of biological role, catalyzes the decarboxylation of four acetate groups of uroporphyrinogen-III to yield coproporphyrinogen-III. This Listeria monocytogenes serotype 4b (strain CLIP80459) protein is Uroporphyrinogen decarboxylase.